The following is a 92-amino-acid chain: Nodulation protein F (92 aa).

One can recognise a Carrier domain in the interval 4–88 (QLTVEIIAAI…DVVEAVRGLI (85 aa)). O-(pantetheine 4'-phosphoryl)serine is present on serine 45.

4'-phosphopantetheine is transferred from CoA to a specific serine of apo-NodF.

In terms of biological role, proposed to synthesize nod factor fatty acyl chain. Involved in trans-2,trans-4,trans-6,cis-11-octadecatetraenoic acid biosynthesis. This Rhizobium leguminosarum bv. trifolii protein is Nodulation protein F (nodF).